Here is a 1306-residue protein sequence, read N- to C-terminus: Angiotensin-converting enzyme (1306 aa).

The first 29 residues, 1–29, serve as a signal peptide directing secretion; that stretch reads MGAASGRRGPGLLLPLPLLLLLPPQPALA. At 30–1256 the chain is on the extracellular side; that stretch reads LDPGLQPGNF…GLDLDAQQAR (1227 aa). 9 N-linked (GlcNAc...) asparagine glycosylation sites follow: Asn-38, Asn-54, Asn-74, Glu-103, Asn-111, Ile-121, Tyr-140, Asn-146, and Asn-160. 2 consecutive Peptidase M2 domains span residues 40–624 and 643–1222; these read SADE…LGWP and VTDE…LGWP. Cys-157 and Cys-165 are oxidised to a cystine. A chloride-binding site is contributed by Tyr-231. Residues Asn-318 and Asn-368 are each glycosylated (N-linked (GlcNAc...) asparagine). Cysteines 359 and 377 form a disulfide. His-390 contacts Zn(2+). Glu-391 acts as the Proton acceptor 1 in catalysis. The Zn(2+) site is built by His-394, Pro-414, Glu-418, and Arg-442. N-linked (GlcNAc...) asparagine glycans are attached at residues Asn-445 and Asn-509. His-520 acts as the Proton donor 1 in catalysis. Arg-529 is a binding site for chloride. Cysteines 545 and 557 form a disulfide. N-linked (GlcNAc...) asparagine glycosylation is found at Asn-617 and Asn-677. Residues Asn-695 and Asn-714 are each glycosylated (N-linked (GlcNAc...) (complex) asparagine). Cys-757 and Cys-763 are oxidised to a cystine. Residue Asn-760 is glycosylated (N-linked (GlcNAc...) asparagine; partial). Residues Arg-791 and Tyr-829 each contribute to the chloride site. N-linked (GlcNAc...) asparagine; partial glycosylation is present at Asn-942. Cys-957 and Cys-975 are disulfide-bonded. His-988 contacts Zn(2+). The active-site Proton acceptor 2 is the Glu-989. Residues His-992 and Glu-1016 each contribute to the Zn(2+) site. Positions 1090 and 1094 each coordinate chloride. The active-site Proton donor 2 is His-1118. Residue Arg-1127 participates in chloride binding. An intrachain disulfide couples Cys-1143 to Cys-1155. An N-linked (GlcNAc...) asparagine; partial glycan is attached at Asn-1191. A juxtamembrane stalk region spans residues 1215-1256; it reads HGEKLGWPQYNWTPNSARSEGPLPDSGRVSFLGLDLDAQQAR. A helical transmembrane segment spans residues 1257–1277; that stretch reads VGQWLLLFLGIALLVATLGLS. Residues 1278–1306 lie on the Cytoplasmic side of the membrane; it reads QRLFSIRHRSLHRHSHGPQFGSEVELRHS. At Ser-1299 the chain carries Phosphoserine.

This sequence belongs to the peptidase M2 family. Monomer and homodimer; homodimerizes following binding to an inhibitor. Interacts with calmodulin (CALM1, CALM2 or CALM3); interaction takes place in the cytoplasmic region and regulates phosphorylation and proteolytic cleavage. Requires Zn(2+) as cofactor. Chloride is required as a cofactor. Produced following proteolytic cleavage by secretase enzymes that cleave the transmembrane form in the juxtamembrane stalk region upstream of the transmembrane region. Cleavage can take place at different sites of the juxtamembrane stalk region. Post-translationally, phosphorylated by CK2 on Ser-1299; which allows membrane retention. Phosphorylated on tyrosine residues on its extracellular part, promoting cleavage by secretase enzymes and formation of the soluble form (Angiotensin-converting enzyme, soluble form). In terms of tissue distribution, ubiquitously expressed, with highest levels in lung, kidney, heart, gastrointestinal system and prostate. Specifically expressed in spermatocytes and adult testis.

The protein resides in the cell membrane. The protein localises to the cytoplasm. It is found in the secreted. It carries out the reaction Release of a C-terminal dipeptide, oligopeptide-|-Xaa-Yaa, when Xaa is not Pro, and Yaa is neither Asp nor Glu. Thus, conversion of angiotensin I to angiotensin II, with increase in vasoconstrictor activity, but no action on angiotensin II.. It catalyses the reaction angiotensin I + H2O = L-histidyl-L-leucine + angiotensin II. The enzyme catalyses bradykinin + H2O = L-Phe-L-Arg + bradykinin(1-7). The catalysed reaction is substance P + H2O = substance P(1-9) + L-Leu-L-Met-NH2. It carries out the reaction substance P + H2O = substance P(1-8) + Gly-L-Leu-L-Met-NH2. It catalyses the reaction substance P + H2O = L-Phe-L-Phe-Gly-L-Leu-L-Met-NH2 + substance P(1-6). The enzyme catalyses neurotensin + H2O = neurotensin(1-11) + L-isoleucyl-L-leucine. The catalysed reaction is goralatide + H2O = N-acetyl-L-seryl-L-aspartate + L-lysyl-L-proline. It carries out the reaction Met-enkephalin + H2O = L-phenylalanyl-L-methionine + L-tyrosylglycylglycine. It catalyses the reaction Leu-enkephalin + H2O = L-tyrosylglycylglycine + L-phenylalanyl-L-leucine. The enzyme catalyses Met-enkephalin-Arg-Phe + H2O = L-arginyl-L-phenylalanine + Met-enkephalin. With respect to regulation, the dipeptidyl carboxypeptidase activity is strongly activated by chloride. The dipeptidyl carboxypeptidase activity is specifically inhibited by lisinopril, captopril and enalaprilat. Its activity is regulated as follows. Strongly inhibited by lisinopril and captopril. Functionally, dipeptidyl carboxypeptidase that removes dipeptides from the C-terminus of a variety of circulating hormones, such as angiotensin I, bradykinin or enkephalins, thereby playing a key role in the regulation of blood pressure, electrolyte homeostasis or synaptic plasticity. Composed of two similar catalytic domains, each possessing a functional active site, with different selectivity for substrates. Plays a major role in the angiotensin-renin system that regulates blood pressure and sodium retention by the kidney by converting angiotensin I to angiotensin II, resulting in an increase of the vasoconstrictor activity of angiotensin. Also able to inactivate bradykinin, a potent vasodilator, and therefore enhance the blood pressure response. Acts as a regulator of synaptic transmission by mediating cleavage of neuropeptide hormones, such as substance P, neurotensin or enkephalins. Catalyzes degradation of different enkephalin neuropeptides (Met-enkephalin, Leu-enkephalin, Met-enkephalin-Arg-Phe and possibly Met-enkephalin-Arg-Gly-Leu). Acts as a regulator of synaptic plasticity in the nucleus accumbens of the brain by mediating cleavage of Met-enkephalin-Arg-Phe, a strong ligand of Mu-type opioid receptor OPRM1, into Met-enkephalin. Met-enkephalin-Arg-Phe cleavage by ACE decreases activation of OPRM1, leading to long-term synaptic potentiation of glutamate release. Also acts as a regulator of hematopoietic stem cell differentiation by mediating degradation of hemoregulatory peptide N-acetyl-SDKP (AcSDKP). Acts as a regulator of cannabinoid signaling pathway by mediating degradation of hemopressin, an antagonist peptide of the cannabinoid receptor CNR1. Involved in amyloid-beta metabolism by catalyzing degradation of Amyloid-beta protein 40 and Amyloid-beta protein 42 peptides, thereby preventing plaque formation. Catalyzes cleavage of cholecystokinin (maturation of Cholecystokinin-8 and Cholecystokinin-5) and Gonadoliberin-1 (both maturation and degradation) hormones. Degradation of hemoregulatory peptide N-acetyl-SDKP (AcSDKP) and amyloid-beta proteins is mediated by the N-terminal catalytic domain, while angiotensin I and cholecystokinin cleavage is mediated by the C-terminal catalytic region. Soluble form that is released in blood plasma and other body fluids following proteolytic cleavage in the juxtamembrane stalk region. Its function is as follows. Isoform produced by alternative promoter usage that is specifically expressed in spermatocytes and adult testis, and which is required for male fertility. In contrast to somatic isoforms, only contains one catalytic domain. Acts as a dipeptidyl carboxypeptidase that removes dipeptides from the C-terminus of substrates. The identity of substrates that are needed for male fertility is unknown. May also have a glycosidase activity which releases GPI-anchored proteins from the membrane by cleaving the mannose linkage in the GPI moiety. The GPIase activity was reported to be essential for the egg-binding ability of the sperm. This activity is however unclear and has been challenged by other groups, suggesting that it may be indirect. This chain is Angiotensin-converting enzyme, found in Homo sapiens (Human).